The primary structure comprises 71 residues: Heat-stable enterotoxin A (71 aa).

The first 19 residues, 1 to 19 (MKKIVFVLVLMLSSFGAFG), serve as a signal peptide directing secretion. Residues 20-53 (QETVSGQFSDALSTPITAEVYKQACDPPLPPAEV) constitute a propeptide that is removed on maturation. Disulfide bonds link Cys-59–Cys-64, Cys-60–Cys-68, and Cys-63–Cys-71.

The protein belongs to the heat-stable enterotoxin family.

Its subcellular location is the secreted. Functionally, toxin which activates the particulate form of guanylate cyclase and increases cyclic GMP levels within the host intestinal epithelial cells. The chain is Heat-stable enterotoxin A (ystA) from Yersinia enterocolitica.